The chain runs to 205 residues: ATP phosphoribosyltransferase (205 aa).

The protein belongs to the ATP phosphoribosyltransferase family. Short subfamily. In terms of assembly, heteromultimer composed of HisG and HisZ subunits.

Its subcellular location is the cytoplasm. The catalysed reaction is 1-(5-phospho-beta-D-ribosyl)-ATP + diphosphate = 5-phospho-alpha-D-ribose 1-diphosphate + ATP. Its pathway is amino-acid biosynthesis; L-histidine biosynthesis; L-histidine from 5-phospho-alpha-D-ribose 1-diphosphate: step 1/9. In terms of biological role, catalyzes the condensation of ATP and 5-phosphoribose 1-diphosphate to form N'-(5'-phosphoribosyl)-ATP (PR-ATP). Has a crucial role in the pathway because the rate of histidine biosynthesis seems to be controlled primarily by regulation of HisG enzymatic activity. This Vesicomyosocius okutanii subsp. Calyptogena okutanii (strain HA) protein is ATP phosphoribosyltransferase.